The primary structure comprises 228 residues: Ribose-5-phosphate isomerase A (228 aa).

Substrate-binding positions include 32-35 (TGST), 85-88 (DGAD), and 98-101 (KGGG). Residue E107 is the Proton acceptor of the active site. K125 provides a ligand contact to substrate.

This sequence belongs to the ribose 5-phosphate isomerase family. Homodimer.

It carries out the reaction aldehydo-D-ribose 5-phosphate = D-ribulose 5-phosphate. Its pathway is carbohydrate degradation; pentose phosphate pathway; D-ribose 5-phosphate from D-ribulose 5-phosphate (non-oxidative stage): step 1/1. Catalyzes the reversible conversion of ribose-5-phosphate to ribulose 5-phosphate. The polypeptide is Ribose-5-phosphate isomerase A (Cupriavidus taiwanensis (strain DSM 17343 / BCRC 17206 / CCUG 44338 / CIP 107171 / LMG 19424 / R1) (Ralstonia taiwanensis (strain LMG 19424))).